A 212-amino-acid polypeptide reads, in one-letter code: Pyrrolidone-carboxylate peptidase (212 aa).

Active-site residues include Glu78, Cys141, and His165.

It belongs to the peptidase C15 family. As to quaternary structure, homotetramer.

It is found in the cytoplasm. The catalysed reaction is Release of an N-terminal pyroglutamyl group from a polypeptide, the second amino acid generally not being Pro.. In terms of biological role, removes 5-oxoproline from various penultimate amino acid residues except L-proline. This is Pyrrolidone-carboxylate peptidase from Staphylococcus haemolyticus (strain JCSC1435).